We begin with the raw amino-acid sequence, 418 residues long: UDP-N-acetylglucosamine 1-carboxyvinyltransferase (418 aa).

A phosphoenolpyruvate-binding site is contributed by 22-23; the sequence is KN. Arg91 provides a ligand contact to UDP-N-acetyl-alpha-D-glucosamine. Residue Cys115 is the Proton donor of the active site. Cys115 carries the 2-(S-cysteinyl)pyruvic acid O-phosphothioketal modification. UDP-N-acetyl-alpha-D-glucosamine-binding residues include Asp305 and Ile327.

This sequence belongs to the EPSP synthase family. MurA subfamily.

The protein localises to the cytoplasm. It catalyses the reaction phosphoenolpyruvate + UDP-N-acetyl-alpha-D-glucosamine = UDP-N-acetyl-3-O-(1-carboxyvinyl)-alpha-D-glucosamine + phosphate. The protein operates within cell wall biogenesis; peptidoglycan biosynthesis. Its function is as follows. Cell wall formation. Adds enolpyruvyl to UDP-N-acetylglucosamine. The polypeptide is UDP-N-acetylglucosamine 1-carboxyvinyltransferase (Aeromonas salmonicida (strain A449)).